Here is a 214-residue protein sequence, read N- to C-terminus: Proteasome subunit beta (214 aa).

The propeptide at 1-11 (MLDTSQEIMKG) is removed in mature form; by autocatalysis. Residue threonine 12 is the Nucleophile of the active site.

It belongs to the peptidase T1B family. The 20S proteasome core is composed of 14 alpha and 14 beta subunits that assemble into four stacked heptameric rings, resulting in a barrel-shaped structure. The two inner rings, each composed of seven catalytic beta subunits, are sandwiched by two outer rings, each composed of seven alpha subunits. The catalytic chamber with the active sites is on the inside of the barrel. Has a gated structure, the ends of the cylinder being occluded by the N-termini of the alpha-subunits. Is capped at one or both ends by the proteasome regulatory ATPase, PAN.

The protein localises to the cytoplasm. It carries out the reaction Cleavage of peptide bonds with very broad specificity.. Its activity is regulated as follows. The formation of the proteasomal ATPase PAN-20S proteasome complex, via the docking of the C-termini of PAN into the intersubunit pockets in the alpha-rings, triggers opening of the gate for substrate entry. Interconversion between the open-gate and close-gate conformations leads to a dynamic regulation of the 20S proteasome proteolysis activity. Functionally, component of the proteasome core, a large protease complex with broad specificity involved in protein degradation. The sequence is that of Proteasome subunit beta from Methanoculleus marisnigri (strain ATCC 35101 / DSM 1498 / JR1).